A 127-amino-acid polypeptide reads, in one-letter code: UPF0716 protein YtzA (127 aa).

4 helical membrane passes run 3–22, 26–46, 70–90, and 93–115; these read FLFLLFIVFPAIEIGIFLFL, IGILPTVLFMILTGIIGAAAA, AIADGLCIFIGGLLLMLPGFL, and LAGACLLIPFTRGWCKPILFKWL.

Belongs to the UPF0716 (FxsA) family.

It localises to the cell membrane. In Bacillus subtilis (strain 168), this protein is UPF0716 protein YtzA (ytzA).